A 760-amino-acid chain; its full sequence is General transcription and DNA repair factor IIH helicase subunit XPD (760 aa).

A Helicase ATP-binding domain is found at glycine 7–glutamate 283. Methionine 42 to threonine 49 lines the ATP pocket. Residues cysteine 116, cysteine 134, cysteine 155, and cysteine 190 each contribute to the [4Fe-4S] cluster site. The short motif at aspartate 234–histidine 237 is the DEAH box element. The mediates interaction with MMS19 stretch occupies residues methionine 438–leucine 637. The short motif at lysine 682 to arginine 695 is the Nuclear localization signal element.

The protein belongs to the helicase family. RAD3/XPD subfamily. In terms of assembly, component of the 7-subunit TFIIH core complex composed of XPB/ERCC3, XPD/ERCC2, GTF2H1, GTF2H2, GTF2H3, GTF2H4 and GTF2H5, which is active in NER. The core complex associates with the 3-subunit CDK-activating kinase (CAK) module composed of CCNH/cyclin H, CDK7 and MNAT1 to form the 10-subunit holoenzyme (holo-TFIIH) active in transcription. The interaction with GTF2H2 results in the stimulation of the 5'--&gt;3' helicase activity. Component of the MMXD complex, which includes CIAO1, ERCC2, CIAO2B, MMS19 and SLC25A5. Interacts with CIAO1 and CIAO2B; the interaction WITH CIAO2B is direct. Interacts with ATF7IP. Interacts directly with MMS19. Part of TBP-based Pol II pre-initiation complex (PIC), in which Pol II core assembles with general transcription factors and other specific initiation factors including GTF2E1, GTF2E2, GTF2F1, GTF2F2, TCEA1, ERCC2, ERCC3, GTF2H2, GTF2H3, GTF2H4, GTF2H5, GTF2A1, GTF2A2, GTF2B and TBP; this large multi-subunit PIC complex mediates DNA unwinding and targets Pol II core to the transcription start site where the first phosphodiester bond forms. Mg(2+) serves as cofactor. It depends on [4Fe-4S] cluster as a cofactor. Post-translationally, ISGylated.

The protein localises to the nucleus. It is found in the cytoplasm. Its subcellular location is the cytoskeleton. The protein resides in the spindle. It catalyses the reaction Couples ATP hydrolysis with the unwinding of duplex DNA at the replication fork by translocating in the 5'-3' direction. This creates two antiparallel DNA single strands (ssDNA). The leading ssDNA polymer is the template for DNA polymerase III holoenzyme which synthesizes a continuous strand.. The enzyme catalyses ATP + H2O = ADP + phosphate + H(+). ATP-dependent 5'-3' DNA helicase, component of the general transcription and DNA repair factor IIH (TFIIH) core complex, which is involved in general and transcription-coupled nucleotide excision repair (NER) of damaged DNA and, when complexed to CDK-activating kinase (CAK), involved in transcription by RNA polymerase II. In NER, TFIIH acts by opening DNA around the lesion to allow the excision of the damaged oligonucleotide and its replacement by a new DNA fragment. The ATP-dependent helicase activity of XPD/ERCC2 is required for DNA opening. In transcription, TFIIH has an essential role in transcription initiation. When the pre-initiation complex (PIC) has been established, TFIIH is required for promoter opening and promoter escape. Phosphorylation of the C-terminal tail (CTD) of the largest subunit of RNA polymerase II by the kinase module CAK controls the initiation of transcription. XPD/ERCC2 acts by forming a bridge between CAK and the core-TFIIH complex. Involved in the regulation of vitamin-D receptor activity. As part of the mitotic spindle-associated MMXD complex it plays a role in chromosome segregation. Might have a role in aging process and could play a causative role in the generation of skin cancers. The protein is General transcription and DNA repair factor IIH helicase subunit XPD (ERCC2) of Bos taurus (Bovine).